The following is a 196-amino-acid chain: dITP/XTP pyrophosphatase (196 aa).

Residue 10–15 (TSNKGK) coordinates substrate. Asp-71 acts as the Proton acceptor in catalysis. Asp-71 serves as a coordination point for Mg(2+). Substrate is bound by residues Ser-72, 156 to 159 (FGYD), Lys-179, and 184 to 185 (HR).

It belongs to the HAM1 NTPase family. Homodimer. It depends on Mg(2+) as a cofactor.

It catalyses the reaction XTP + H2O = XMP + diphosphate + H(+). The enzyme catalyses dITP + H2O = dIMP + diphosphate + H(+). It carries out the reaction ITP + H2O = IMP + diphosphate + H(+). Pyrophosphatase that catalyzes the hydrolysis of nucleoside triphosphates to their monophosphate derivatives, with a high preference for the non-canonical purine nucleotides XTP (xanthosine triphosphate), dITP (deoxyinosine triphosphate) and ITP. Seems to function as a house-cleaning enzyme that removes non-canonical purine nucleotides from the nucleotide pool, thus preventing their incorporation into DNA/RNA and avoiding chromosomal lesions. This chain is dITP/XTP pyrophosphatase, found in Haemophilus ducreyi (strain 35000HP / ATCC 700724).